The chain runs to 473 residues: MSPQTETKASVGFKAGVKDYKLTYYTPDYETKDTDILAAFRVTPQPGVPPEEAGAAVAAESSTGTWTTVWTDGLTSLDRYKGRCYGIEPVAGEENQYIAYVAYPLDLFEEGSVTNMFTSIVGNVFGFKALRALRLEDLRIPTSYIKTFQGPPHGIQVERDKLNKYGRPLLGCTIKPKLGLSAKNYGRAVYECLRGGLDFTKDDENVNSQPFMRWRDRFLFCAEAIFKSQAETGEIKGHYLNATAGTCEEMIKRAVFARELGVPIVMHDYLTGGFTANTSLAHYCRDNGLLLHIHRAMHAVIDRQKNHGMHFRVLAKALRLSGGDHIHAGTVVGKLEGEREITLGFVDLLRDDYVEKDRSRGIYFTQDWVSLPGVLPVASGGIHVWHMPALTEIFGDDSVLQFGGGTLGHPWGNAPGAVANRVALEACVQARNEGRDLAREGNEIIREASKWSPELAAACEVWKEIKFEFPAMD.

Residues 1–2 (MS) constitute a propeptide that is removed on maturation. P3 bears the N-acetylproline mark. N6,N6,N6-trimethyllysine is present on K14. Residues N123 and T173 each coordinate substrate. Catalysis depends on K175, which acts as the Proton acceptor. K177 serves as a coordination point for substrate. Positions 201, 203, and 204 each coordinate Mg(2+). K201 carries the N6-carboxylysine modification. Catalysis depends on H294, which acts as the Proton acceptor. Substrate is bound by residues R295, H327, and S379.

Belongs to the RuBisCO large chain family. Type I subfamily. In terms of assembly, heterohexadecamer of 8 large chains and 8 small chains; disulfide-linked. The disulfide link is formed within the large subunit homodimers. Mg(2+) is required as a cofactor. The disulfide bond which can form in the large chain dimeric partners within the hexadecamer appears to be associated with oxidative stress and protein turnover.

It is found in the plastid. It localises to the chloroplast. The enzyme catalyses 2 (2R)-3-phosphoglycerate + 2 H(+) = D-ribulose 1,5-bisphosphate + CO2 + H2O. The catalysed reaction is D-ribulose 1,5-bisphosphate + O2 = 2-phosphoglycolate + (2R)-3-phosphoglycerate + 2 H(+). Its function is as follows. RuBisCO catalyzes two reactions: the carboxylation of D-ribulose 1,5-bisphosphate, the primary event in carbon dioxide fixation, as well as the oxidative fragmentation of the pentose substrate in the photorespiration process. Both reactions occur simultaneously and in competition at the same active site. The polypeptide is Ribulose bisphosphate carboxylase large chain (Sesbania sesban (Egyptian riverhemp)).